The sequence spans 1041 residues: Sarcoplasmic/endoplasmic reticulum calcium ATPase 2 (1041 aa).

At 1-48 the chain is on the cytoplasmic side; that stretch reads MENAHTKTVEEVLAYFGVNESTGLSLEQVKKLKEKWGSNELPAEEGKT. A helical membrane pass occupies residues 49–69; the sequence is LLELVIEQFEDLLVRILLLAA. Residues 70 to 89 lie on the Lumenal side of the membrane; that stretch reads CISFVLAWFEEGEETITAFV. A helical membrane pass occupies residues 90–110; that stretch reads EPFVILLILVANAIVGVWQER. The Cytoplasmic segment spans residues 111-253; it reads NAENAIEALK…QERTPLQQKL (143 aa). Residues 254–273 form a helical membrane-spanning segment; the sequence is DEFGEQLSKVISLICIAVWI. The Lumenal segment spans residues 274 to 295; that stretch reads INIGHFNDPVHGGSWIRGAIYY. The helical transmembrane segment at 296-313 threads the bilayer; it reads FKIAVALAVAAIPEGLPA. Residues valine 304, alanine 305, isoleucine 307, and glutamate 309 each coordinate Ca(2+). Residues 314–756 are Cytoplasmic-facing; sequence VITTCLALGT…EEGRAIYNNM (443 aa). The 4-aspartylphosphate intermediate role is filled by aspartate 351. Mg(2+)-binding residues include aspartate 351 and threonine 353. Residues threonine 353, glutamate 442, arginine 489, lysine 514, arginine 559, threonine 624, glycine 625, aspartate 626, arginine 677, and lysine 683 each contribute to the ATP site. Residue aspartate 702 participates in Mg(2+) binding. ATP is bound at residue asparagine 705. A helical transmembrane segment spans residues 757–776; that stretch reads KQFIRYLISSNVGEVVCIFL. The Ca(2+) site is built by asparagine 767 and glutamate 770. At 777–786 the chain is on the lumenal side; it reads TAALGFPEAL. Residues 787 to 807 form a helical membrane-spanning segment; the sequence is IPVQLLWVNLVTDGLPATALG. The segment at 787–807 is interaction with PLN; it reads IPVQLLWVNLVTDGLPATALG. Residues asparagine 795, threonine 798, and aspartate 799 each coordinate Ca(2+). The Cytoplasmic segment spans residues 808 to 827; that stretch reads FNPPDLDIMNKPPRNPKEPL. Residues 828 to 850 form a helical membrane-spanning segment; sequence ISGWLFFRYLAIGCYVGAATVGA. Topologically, residues 851 to 896 are lumenal; that stretch reads AAWWFIAADGGPRVTFYQLSHFLQCKEDNPDFSGVDCVVFESPYPM. The cysteines at positions 875 and 887 are disulfide-linked. The helical transmembrane segment at 897 to 916 threads the bilayer; the sequence is TMALSVLVTIEMCNALNSLS. Position 907 (glutamate 907) interacts with Ca(2+). The Cytoplasmic segment spans residues 917-929; that stretch reads ENQSLMRMPPWEN. The helical transmembrane segment at 930-948 threads the bilayer; it reads IWLVGAICLSMSLHFLILY. Residues 931-942 form an interaction with PLN region; the sequence is WLVGAICLSMSL. Residues 949 to 963 lie on the Lumenal side of the membrane; the sequence is VEPLPIIFQITPLNV. The chain crosses the membrane as a helical span at residues 964–984; the sequence is TQWLMVLKISLPVILLDETLK. The Cytoplasmic portion of the chain corresponds to 985 to 1041; that stretch reads YVARNYLEPGKDSVQPATKPCSLSACTEGVSWPFVFITLPLVIWLYSTDTNFSDMFW.

Belongs to the cation transport ATPase (P-type) (TC 3.A.3) family. Type IIA subfamily. As to quaternary structure, interacts with sarcolipin (SLN). Interacts with phospholamban (PLN). Interacts with myoregulin (MRLN). Interacts with DWORF. Interacts with TMX2. Requires Mg(2+) as cofactor. Only isoform 2 is detected in heart, while both isoforms are expressed in brain, with isoform 2 being predominant.

Its subcellular location is the endoplasmic reticulum membrane. The protein resides in the sarcoplasmic reticulum membrane. It catalyses the reaction Ca(2+)(in) + ATP + H2O = Ca(2+)(out) + ADP + phosphate + H(+). Reversibly inhibited by phospholamban (PLN) at low calcium concentrations. Inhibited by sarcolipin (SLN) and myoregulin (MRLN). Enhanced by DWORF; DWORF increases activity by displacing sarcolipin (SLN), phospholamban (PLN) and myoregulin (MRLN). This magnesium-dependent enzyme catalyzes the hydrolysis of ATP coupled with the translocation of calcium from the cytosol to the sarcoplasmic reticulum lumen. Isoform SERCA2A is involved in the regulation of the contraction/relaxation cycle. May act as a regulator of TNFSF11-mediated Ca(2+) signaling during osteoclastogenesis. This Gallus gallus (Chicken) protein is Sarcoplasmic/endoplasmic reticulum calcium ATPase 2 (ATP2A2).